The sequence spans 264 residues: MDDEVYKQRLTALNNLRIVIFFDILIILLGYIGTWNLKTLQLVNPSLWSFSPSLWIYIRGTVLCADCIFTAGSANEYSAVQNSVFQVSSLMFYGLMMEFFGYSFDRVGCMELAFISFSAACYFNIRSIKSLSLKNKNWTIISIIEIPIKLHFILNVLLFLKFSEYMLPLLGRVHLSYHLFALWVINLYIWIKLIDSKDFVLGFLAGLSVLLLNTGSLITAKPLISYFNLLTSCLIIFPSIWIYAIEKKNFKNLSYEDDDYRNYW.

A run of 7 helical transmembrane segments spans residues 18–38 (IVIFFDILIILLGYIGTWNLK), 54–74 (LWIYIRGTVLCADCIFTAGSA), 84–104 (VFQVSSLMFYGLMMEFFGYSF), 140–160 (IISIIEIPIKLHFILNVLLFL), 174–194 (HLSYHLFALWVINLYIWIKLI), 199–219 (FVLGFLAGLSVLLLNTGSLIT), and 223–243 (LISYFNLLTSCLIIFPSIWIY).

The protein resides in the endoplasmic reticulum membrane. Has a role in meiosis. This is Meiotically up-regulated gene 162 protein (mug162) from Schizosaccharomyces pombe (strain 972 / ATCC 24843) (Fission yeast).